Reading from the N-terminus, the 417-residue chain is Serine--tRNA ligase (417 aa).

232–234 (TAE) provides a ligand contact to L-serine. Residues 263–265 (RRE) and Val279 contribute to the ATP site. An L-serine-binding site is contributed by Glu286. 350–353 (EISS) is a binding site for ATP. L-serine is bound at residue Ser385.

The protein belongs to the class-II aminoacyl-tRNA synthetase family. Type-1 seryl-tRNA synthetase subfamily. Homodimer. The tRNA molecule binds across the dimer.

It localises to the cytoplasm. The enzyme catalyses tRNA(Ser) + L-serine + ATP = L-seryl-tRNA(Ser) + AMP + diphosphate + H(+). The catalysed reaction is tRNA(Sec) + L-serine + ATP = L-seryl-tRNA(Sec) + AMP + diphosphate + H(+). It participates in aminoacyl-tRNA biosynthesis; selenocysteinyl-tRNA(Sec) biosynthesis; L-seryl-tRNA(Sec) from L-serine and tRNA(Sec): step 1/1. In terms of biological role, catalyzes the attachment of serine to tRNA(Ser). Is also able to aminoacylate tRNA(Sec) with serine, to form the misacylated tRNA L-seryl-tRNA(Sec), which will be further converted into selenocysteinyl-tRNA(Sec). This is Serine--tRNA ligase from Leptospira interrogans serogroup Icterohaemorrhagiae serovar copenhageni (strain Fiocruz L1-130).